The sequence spans 148 residues: Glutamyl-tRNA(Gln) amidotransferase subunit C, mitochondrial (148 aa).

Residues 1 to 10 (MLRLLNKRFY) constitute a mitochondrion transit peptide.

It belongs to the GatC family. Subunit of the heterotrimeric GatCAB amidotransferase (AdT) complex, composed of A, B and C subunits.

The protein resides in the mitochondrion. It catalyses the reaction L-glutamyl-tRNA(Gln) + L-glutamine + ATP + H2O = L-glutaminyl-tRNA(Gln) + L-glutamate + ADP + phosphate + H(+). Allows the formation of correctly charged Gln-tRNA(Gln) through the transamidation of misacylated Glu-tRNA(Gln) in the mitochondria. The reaction takes place in the presence of glutamine and ATP through an activated gamma-phospho-Glu-tRNA(Gln). The polypeptide is Glutamyl-tRNA(Gln) amidotransferase subunit C, mitochondrial (Drosophila ananassae (Fruit fly)).